A 115-amino-acid polypeptide reads, in one-letter code: NADH-ubiquinone oxidoreductase chain 3 (115 aa).

The next 3 membrane-spanning stretches (helical) occupy residues 4 to 24 (LLVI…AFWL), 55 to 75 (FFLV…LLPI), and 84 to 104 (INMV…GLAY).

This sequence belongs to the complex I subunit 3 family. In terms of assembly, core subunit of respiratory chain NADH dehydrogenase (Complex I) which is composed of 45 different subunits. Interacts with TMEM186. Interacts with TMEM242.

The protein localises to the mitochondrion inner membrane. It carries out the reaction a ubiquinone + NADH + 5 H(+)(in) = a ubiquinol + NAD(+) + 4 H(+)(out). Its function is as follows. Core subunit of the mitochondrial membrane respiratory chain NADH dehydrogenase (Complex I) which catalyzes electron transfer from NADH through the respiratory chain, using ubiquinone as an electron acceptor. Essential for the catalytic activity of complex I. The protein is NADH-ubiquinone oxidoreductase chain 3 of Ochrotomys nuttalli (Golden mouse).